Here is a 337-residue protein sequence, read N- to C-terminus: m7GpppX diphosphatase (337 aa).

The tract at residues 1–37 (MAELAHQQSKRKRELDAEEAEASSTEGEEAGVGNGTS) is disordered. Ala2 is modified (N-acetylalanine). Positions 10–13 (KRKR) match the nuclear localization signal (NLS) motif. The segment covering 16–29 (DAEEAEASSTEGEE) has biased composition (acidic residues). A phosphoserine mark is found at Ser24 and Ser101. Lys138 and Lys142 each carry N6-acetyllysine. The nuclear export sequence (NES) motif lies at 142-154 (KYLRQDLHLVRET). Residues Trp175, Glu185, Asp205, Lys207, and 268-279 (HYLPSYYHLHVH) each bind substrate. The short motif at 275–279 (HLHVH) is the Histidine triad motif element. The active-site Nucleophile is His277.

This sequence belongs to the HIT family. In terms of assembly, homodimer. Associates with components of the exosome multienzyme ribonuclease complex, such as EXOSC3 and EXOSC4. Interacts with NDOR1.

Its subcellular location is the cytoplasm. It localises to the nucleus. The enzyme catalyses a 5'-end (N(7)-methyl 5'-triphosphoguanosine)-ribonucleoside in mRNA + H2O = N(7)-methyl-GMP + a 5'-end diphospho-ribonucleoside in mRNA + 2 H(+). The hydrolytic product 7-methylguanosine diphosphate (m7GDP) efficiently inhibits the decapping scavenger activity and acts as a competitive inhibitor in vitro. Inhibited by 2,4-diaminoquinazoline. Decapping scavenger enzyme that catalyzes the cleavage of a residual cap structure following the degradation of mRNAs by 3'-&gt;5' exosome-mediated mRNA decay pathway. Hydrolyzes cap analog structures like 7-methylguanosine nucleoside triphosphate (m7GpppG) with up to 10 nucleotide substrates (small capped oligoribonucleotides) and specifically releases 5'-phosphorylated RNA fragments and 7-methylguanosine monophosphate (m7GMP). Cleaves cap analog structures like tri-methyl guanosine nucleoside triphosphate (m3(2,2,7)GpppG) with very poor efficiency. Does not hydrolyze unmethylated cap analog (GpppG) and shows no decapping activity on intact m7GpppG-capped mRNA molecules longer than 25 nucleotides. Does not hydrolyze 7-methylguanosine diphosphate (m7GDP) to m7GMP. May also play a role in the 5'-&gt;3 mRNA decay pathway; m7GDP, the downstream product released by the 5'-&gt;3' mRNA mediated decapping activity, may be also converted by DCPS to m7GMP. Binds to m7GpppG and strongly to m7GDP. Plays a role in first intron splicing of pre-mRNAs. Inhibits activation-induced cell death. The protein is m7GpppX diphosphatase (DCPS) of Bos taurus (Bovine).